The following is a 570-amino-acid chain: MFS-type transporter ptmT (570 aa).

Positions Met1 to Thr11 are enriched in polar residues. Positions Met1–Gln34 are disordered. Helical transmembrane passes span Gly50–Leu70, Trp94–Tyr114, Trp121–Pro141, Ala151–Ile171, Ala182–Phe202, Trp210–Met230, Gly247–Leu267, Asn278–Ile298, Ile323–Phe343, Ile356–Ile376, Val379–Leu399, Ile413–Val433, Val445–Ala465, and Val517–Ile537. Asn541 carries N-linked (GlcNAc...) asparagine glycosylation. The interval Pro550–Thr570 is disordered. A compositionally biased stretch (basic and acidic residues) spans Gly561–Thr570.

This sequence belongs to the major facilitator superfamily. TCR/Tet family.

Its subcellular location is the cell membrane. Its function is as follows. MFS-type transporter; part of the gene cluster that mediates the biosynthesis of the indole diterpenes penitrems. May be involved in the efflux of penitrems. This Penicillium ochrochloron protein is MFS-type transporter ptmT.